The primary structure comprises 192 residues: dTTP/UTP pyrophosphatase (192 aa).

The active-site Proton acceptor is aspartate 65.

The protein belongs to the Maf family. YhdE subfamily. Requires a divalent metal cation as cofactor.

The protein localises to the cytoplasm. The enzyme catalyses dTTP + H2O = dTMP + diphosphate + H(+). It catalyses the reaction UTP + H2O = UMP + diphosphate + H(+). Functionally, nucleoside triphosphate pyrophosphatase that hydrolyzes dTTP and UTP. May have a dual role in cell division arrest and in preventing the incorporation of modified nucleotides into cellular nucleic acids. The protein is dTTP/UTP pyrophosphatase of Fusobacterium nucleatum subsp. nucleatum (strain ATCC 25586 / DSM 15643 / BCRC 10681 / CIP 101130 / JCM 8532 / KCTC 2640 / LMG 13131 / VPI 4355).